The following is a 355-amino-acid chain: Small ribosomal subunit protein uS2 (355 aa).

Belongs to the universal ribosomal protein uS2 family.

This Methylobacterium radiotolerans (strain ATCC 27329 / DSM 1819 / JCM 2831 / NBRC 15690 / NCIMB 10815 / 0-1) protein is Small ribosomal subunit protein uS2.